A 413-amino-acid chain; its full sequence is Serine hydroxymethyltransferase (413 aa).

Residues L117 and 121–123 (GHL) contribute to the (6S)-5,6,7,8-tetrahydrofolate site. K226 carries the N6-(pyridoxal phosphate)lysine modification. Residue 349–351 (SPF) coordinates (6S)-5,6,7,8-tetrahydrofolate.

It belongs to the SHMT family. As to quaternary structure, homodimer. Pyridoxal 5'-phosphate is required as a cofactor.

It is found in the cytoplasm. The catalysed reaction is (6R)-5,10-methylene-5,6,7,8-tetrahydrofolate + glycine + H2O = (6S)-5,6,7,8-tetrahydrofolate + L-serine. The protein operates within one-carbon metabolism; tetrahydrofolate interconversion. Its pathway is amino-acid biosynthesis; glycine biosynthesis; glycine from L-serine: step 1/1. Functionally, catalyzes the reversible interconversion of serine and glycine with tetrahydrofolate (THF) serving as the one-carbon carrier. This reaction serves as the major source of one-carbon groups required for the biosynthesis of purines, thymidylate, methionine, and other important biomolecules. Also exhibits THF-independent aldolase activity toward beta-hydroxyamino acids, producing glycine and aldehydes, via a retro-aldol mechanism. In Listeria welshimeri serovar 6b (strain ATCC 35897 / DSM 20650 / CCUG 15529 / CIP 8149 / NCTC 11857 / SLCC 5334 / V8), this protein is Serine hydroxymethyltransferase.